A 301-amino-acid chain; its full sequence is Dihydroorotate dehydrogenase B (NAD(+)), catalytic subunit (301 aa).

Substrate-binding positions include K44, 68 to 72, and N122; that span reads NAMGL. Position 44–45 (44–45) interacts with FMN; sequence KS. N122 serves as a coordination point for FMN. C125 (nucleophile) is an active-site residue. The FMN site is built by K160 and I186. A substrate-binding site is contributed by 187 to 188; it reads NT. FMN-binding positions include G212, 238–239, and 260–261; these read GG and GS.

Belongs to the dihydroorotate dehydrogenase family. Type 1 subfamily. In terms of assembly, heterotetramer of 2 PyrK and 2 PyrD type B subunits. It depends on FMN as a cofactor.

It localises to the cytoplasm. It carries out the reaction (S)-dihydroorotate + NAD(+) = orotate + NADH + H(+). It participates in pyrimidine metabolism; UMP biosynthesis via de novo pathway; orotate from (S)-dihydroorotate (NAD(+) route): step 1/1. Functionally, catalyzes the conversion of dihydroorotate to orotate with NAD(+) as electron acceptor. The chain is Dihydroorotate dehydrogenase B (NAD(+)), catalytic subunit (pyrD) from Methanocella arvoryzae (strain DSM 22066 / NBRC 105507 / MRE50).